A 512-amino-acid polypeptide reads, in one-letter code: Maturase K (512 aa).

The protein belongs to the intron maturase 2 family. MatK subfamily.

The protein resides in the plastid. It localises to the chloroplast. Functionally, usually encoded in the trnK tRNA gene intron. Probably assists in splicing its own and other chloroplast group II introns. This is Maturase K from Erythranthe guttata (Yellow monkey flower).